A 337-amino-acid polypeptide reads, in one-letter code: 1-aminocyclopropane-1-carboxylate deaminase (337 aa).

Lys50 carries the post-translational modification N6-(pyridoxal phosphate)lysine.

The protein belongs to the ACC deaminase/D-cysteine desulfhydrase family. As to quaternary structure, homotrimer. It depends on pyridoxal 5'-phosphate as a cofactor.

The catalysed reaction is 1-aminocyclopropane-1-carboxylate + H2O = 2-oxobutanoate + NH4(+). Functionally, catalyzes a cyclopropane ring-opening reaction, the irreversible conversion of 1-aminocyclopropane-1-carboxylate (ACC) to ammonia and alpha-ketobutyrate. Allows growth on ACC as a nitrogen source. In Mesorhizobium japonicum (strain LMG 29417 / CECT 9101 / MAFF 303099) (Mesorhizobium loti (strain MAFF 303099)), this protein is 1-aminocyclopropane-1-carboxylate deaminase.